Reading from the N-terminus, the 337-residue chain is DNA-directed RNA polymerase subunit alpha (337 aa).

Positions 1-233 (MVREKVTVST…DLFIPFLHME (233 aa)) are alpha N-terminal domain (alpha-NTD). Residues 265–337 (KKIALKSIFI…FVIDLAKNKF (73 aa)) are alpha C-terminal domain (alpha-CTD).

This sequence belongs to the RNA polymerase alpha chain family. In terms of assembly, in plastids the minimal PEP RNA polymerase catalytic core is composed of four subunits: alpha, beta, beta', and beta''. When a (nuclear-encoded) sigma factor is associated with the core the holoenzyme is formed, which can initiate transcription.

It is found in the plastid. Its subcellular location is the chloroplast. It carries out the reaction RNA(n) + a ribonucleoside 5'-triphosphate = RNA(n+1) + diphosphate. Its function is as follows. DNA-dependent RNA polymerase catalyzes the transcription of DNA into RNA using the four ribonucleoside triphosphates as substrates. The chain is DNA-directed RNA polymerase subunit alpha from Solanum lycopersicum (Tomato).